We begin with the raw amino-acid sequence, 631 residues long: Sphingomyelin phosphodiesterase (631 aa).

A disordered region spans residues 1–23; sequence MPRYGASLRQSCPRSGREQGQDG. The signal sequence occupies residues 1 to 46; the sequence is MPRYGASLRQSCPRSGREQGQDGTAGAPGLLWMGLVLALALALALA. The Saposin B-type domain occupies 87-171; the sequence is GNLTCPICKG…LLGSTCGHWD (85 aa). The N-linked (GlcNAc...) asparagine glycan is linked to Asn-88. Intrachain disulfides connect Cys-91–Cys-167, Cys-94–Cys-159, and Cys-122–Cys-133. Asn-177 carries N-linked (GlcNAc...) asparagine glycosylation. Residues Asp-208 and His-210 each coordinate Zn(2+). Cystine bridges form between Cys-223–Cys-228 and Cys-229–Cys-252. Positions 280 and 320 each coordinate Zn(2+). Asn-337 and Asn-397 each carry an N-linked (GlcNAc...) asparagine glycan. Cys-387 and Cys-433 are joined by a disulfide. Zn(2+) is bound by residues His-427, His-459, and His-461. N-linked (GlcNAc...) asparagine glycosylation is present at Asn-505. A Phosphoserine; by PKC/PRKCD modification is found at Ser-510. N-linked (GlcNAc...) asparagine glycosylation occurs at Asn-522. Cystine bridges form between Cys-586-Cys-590 and Cys-596-Cys-609.

Belongs to the acid sphingomyelinase family. Monomer. Interacts with SORT1; the interaction is required for SMPD1 targeting to lysosomes. It depends on Zn(2+) as a cofactor. In terms of processing, proteolytically processed. Mature lysosomal form arises from C-terminal proteolytic processing of pro-sphingomyelin phosphodiesterase. This form is generated following cleavage by CASP7 in the extracellular milieu. It shows increased activity. Post-translationally, both lysosomal and secreted forms are glycosylated but they show a differential pattern of glycosylation. In terms of processing, phosphorylated at Ser-510 by PRKCD upon stress stimuli. Phosphorylation is required for secretion.

The protein localises to the lysosome. It is found in the lipid droplet. The protein resides in the secreted. Its subcellular location is the extracellular space. It catalyses the reaction a sphingomyelin + H2O = phosphocholine + an N-acylsphing-4-enine + H(+). The catalysed reaction is N-(octadecanoyl)-sphing-4-enine-1-phosphocholine + H2O = N-octadecanoylsphing-4-enine + phosphocholine + H(+). The enzyme catalyses 1,2-dihexadecanoyl-sn-glycero-3-phosphocholine + H2O = 1,2-dihexadecanoyl-sn-glycerol + phosphocholine + H(+). It carries out the reaction a 1,2-diacyl-sn-glycero-3-phosphocholine + H2O = phosphocholine + a 1,2-diacyl-sn-glycerol + H(+). Its activity is regulated as follows. Hydrolysis of liposomal sphingomyelin is stimulated by incorporation of diacylglycerol (DAG), ceramide and free fatty acids into the liposomal membranes. Phosphatidylcholine hydrolysis is inhibited by incorporation of cholesterol, ceramide, DAG, monoacylglycerol and fatty acids. Antidepressants, namely amitriptyline, imipramine, desipramine, fluoxetine, sertraline, escitalopram, and maprotiline inhibit sphingomyelin phosphodiesterase activity. (Microbial infection) The secretory form is activated by P.aeruginosa, this activation results in the release of ceramide in the outer leaflet of the plasma membrane. With respect to regulation, (Microbial infection) The secretory form is activated by human coronavirus SARS-CoV-2, this activation results in the release of ceramide in the outer leaflet of the plasma membrane. Converts sphingomyelin to ceramide. Exists as two enzymatic forms that arise from alternative trafficking of a single protein precursor, one that is targeted to the endolysosomal compartment, whereas the other is released extracellularly. However, in response to various forms of stress, lysosomal exocytosis may represent a major source of the secretory form. Its function is as follows. In the lysosomes, converts sphingomyelin to ceramide. Plays an important role in the export of cholesterol from the intraendolysosomal membranes. Also has phospholipase C activities toward 1,2-diacylglycerolphosphocholine and 1,2-diacylglycerolphosphoglycerol. Modulates stress-induced apoptosis through the production of ceramide. In terms of biological role, when secreted, modulates cell signaling with its ability to reorganize the plasma membrane by converting sphingomyelin to ceramide. Secreted form is increased in response to stress and inflammatory mediators such as IL1B, IFNG or TNF as well as upon infection with bacteria and viruses. Produces the release of ceramide in the outer leaflet of the plasma membrane playing a central role in host defense. Ceramide reorganizes these rafts into larger signaling platforms that are required to internalize P.aeruginosa, induce apoptosis and regulate the cytokine response in infected cells. In wounded cells, the lysosomal form is released extracellularly in the presence of Ca(2+) and promotes endocytosis and plasma membrane repair. Functionally, this form is generated following cleavage by CASP7 in the extracellular milieu in response to bacterial infection. It shows increased ability to convert sphingomyelin to ceramide and promotes plasma membrane repair. Plasma membrane repair by ceramide counteracts the action of gasdermin-D (GSDMD) perforin (PRF1) pores that are formed in response to bacterial infection. (Microbial infection) Secretion is activated by bacteria such as P.aeruginosa, N.gonorrhoeae and others, this activation results in the release of ceramide in the outer leaflet of the plasma membrane which facilitates the infection. Its function is as follows. (Microbial infection) Secretion is activated by human coronaviruses SARS-CoV and SARS-CoV-2 as well as Zaire ebolavirus, this activation results in the release of ceramide in the outer leaflet of the plasma membrane which facilitates the infection. In terms of biological role, lacks residues that bind the cofactor Zn(2+) and has no enzyme activity. The chain is Sphingomyelin phosphodiesterase from Homo sapiens (Human).